The sequence spans 240 residues: MLEIRQNHCFYLFNWDEPRQDQTRFFSPEFWRRQGRISGTAQGRGITWFLQTVDLFGVNAALRHYYRGGLWGKINRDRYTFTSLENTRSFAEFRLLSRLHQAGMPVPKPLAAKVEKLSLGGYRADILTEKVENARDLTALLQTENLSDEAWRQIGKLIRRLHDLQICHTDLNAHNILVQQVKEQEKYWLLDFDKCGEKSGDFWKAQNLARLKRSFLKEAARMGIRFTEGDWKNLLKGYQN.

Residue D170 is part of the active site.

This sequence belongs to the protein kinase superfamily. KdkA/RfaP family.

The protein resides in the cell inner membrane. It catalyses the reaction an alpha-Kdo-(2-&gt;6)-lipid IVA + ATP = a 4-O-phospho-alpha-Kdo-(2-&gt;6)-lipid IVA + ADP + H(+). Its pathway is bacterial outer membrane biogenesis; LPS core biosynthesis. Functionally, catalyzes the ATP-dependent phosphorylation of the 3-deoxy-D-manno-octulosonic acid (Kdo) residue in Kdo-lipid IV(A) at the 4-OH position. The sequence is that of 3-deoxy-D-manno-octulosonic acid kinase from Actinobacillus succinogenes (strain ATCC 55618 / DSM 22257 / CCUG 43843 / 130Z).